The primary structure comprises 147 residues: Nucleoside diphosphate kinase (147 aa).

Residues K9, F57, R85, T91, R102, and N112 each contribute to the ATP site. The active-site Pros-phosphohistidine intermediate is H115.

This sequence belongs to the NDK family. As to quaternary structure, homotetramer. Requires Mg(2+) as cofactor.

It is found in the cytoplasm. It carries out the reaction a 2'-deoxyribonucleoside 5'-diphosphate + ATP = a 2'-deoxyribonucleoside 5'-triphosphate + ADP. It catalyses the reaction a ribonucleoside 5'-diphosphate + ATP = a ribonucleoside 5'-triphosphate + ADP. In terms of biological role, major role in the synthesis of nucleoside triphosphates other than ATP. The ATP gamma phosphate is transferred to the NDP beta phosphate via a ping-pong mechanism, using a phosphorylated active-site intermediate. The chain is Nucleoside diphosphate kinase from Fervidobacterium nodosum (strain ATCC 35602 / DSM 5306 / Rt17-B1).